We begin with the raw amino-acid sequence, 336 residues long: MKTLMRHGLAVCLVLTTMCTSLLLVYSSLGSQKERPPQQQQQQQQQQQQAATATGSTQLVESSPQPRRTAPAGPRQLEGYLGVADHKPLKMHCKDCALVTSSGHLLRSQQGPHIDQTECVIRMNDAPTRGYGLDVGNRTSLRVIAHSSIQRILRNRHDLLNVSQGTVFIFWGPSSYMRRDGKGQAYNNLQLLSQVLPRLKAFMITRHRMLQFDELFKQETGKDRKISNTWLSTGWFTMTIALELCDRIDVYGMVPPDFCRDPKHPSVPYHYYEPSGPDECTMYLSHERGRKGSHHRFITEKRVFKNWARTFNIHFFQPDWKPESPAVNHAEGKPVF.

Residues 1–8 (MKTLMRHG) lie on the Cytoplasmic side of the membrane. The chain crosses the membrane as a helical; Signal-anchor for type II membrane protein span at residues 9 to 29 (LAVCLVLTTMCTSLLLVYSSL). Topologically, residues 30 to 336 (GSQKERPPQQ…VNHAEGKPVF (307 aa)) are lumenal. The tract at residues 34 to 76 (ERPPQQQQQQQQQQQQAATATGSTQLVESSPQPRRTAPAGPRQ) is disordered. The segment covering 38–49 (QQQQQQQQQQQQ) has biased composition (low complexity). Residues 50 to 66 (AATATGSTQLVESSPQP) show a composition bias toward polar residues. Cys-96 and Cys-245 are oxidised to a cystine. N-linked (GlcNAc...) asparagine glycosylation is found at Asn-137 and Asn-161.

The protein belongs to the glycosyltransferase 29 family. In terms of tissue distribution, high expression in forebrain and to a lesser extent in cerebellum. No expression in salivary gland, intestine, liver, kidney, heart, lung, thymus and spleen.

The protein localises to the golgi apparatus membrane. The catalysed reaction is a ganglioside GM1b (d18:1(4E)) + CMP-N-acetyl-beta-neuraminate = a ganglioside GD1alpha (d18:1(4E)) + CMP + H(+). It carries out the reaction N-acetyl-alpha-neuraminosyl-(2-&gt;3)-beta-D-galactosyl-(1-&gt;3)-N-acetyl-beta-D-glucosaminyl-(1-&gt;3)-beta-D-galactosyl-(1-&gt;4)-beta-D-glucosyl-(1&lt;-&gt;1')-N-acyl-sphing-4-enine + CMP-N-acetyl-beta-neuraminate = N-acetyl-alpha-neuraminosyl-(2-&gt;3)-beta-D-galactosyl-(1-&gt;3)-[N-acetyl-alpha-neuraminosyl-(2-&gt;6)]-N-acetyl-beta-D-glucosaminyl-(1-&gt;3)-beta-D-galactosyl-(1-&gt;4)-beta-D-glucosyl-(1&lt;-&gt;1')-N-acyl-sphing-4-enine + CMP + H(+). It participates in glycolipid biosynthesis. Predominantly catalyzes the biosynthesis of ganglioside GD1alpha from GM1b in the brain, by transferring the sialyl group (N-acetyl-alpha-neuraminyl or NeuAc) from CMP-NeuAc to the GalNAc residue on the NeuAc-alpha-2,3-Gal-beta-1,3-GalNAc sequence of GM1b. GD1alpha is a critical molecule in the communication and interaction between neuronal cells and their supportive cells, particularly in brain tissues, and functions as an adhesion molecule in the process of metastasis. Also shows activity towards sialyl Lc4Cer (N-acetyl-alpha-neuraminosyl-(2-&gt;3)-beta-D-galactosyl-(1-&gt;3)-N-acetyl-beta-D-glucosaminyl-(1-&gt;3)-beta-D-galactosyl-(1-&gt;4)-beta-D-glucosyl-(1&lt;-&gt;1')-N-acyl-sphing-4-enine) generating disialyl Lc4Cer, which can lead to the synthesis of disialyl Lewis a (Le(a)), suggested to be a cancer-associated antigen. This chain is Alpha-N-acetylgalactosaminide alpha-2,6-sialyltransferase 5 (St6galnac5), found in Mus musculus (Mouse).